Consider the following 288-residue polypeptide: 30 kDa spicule matrix protein (288 aa).

A signal peptide spans 1–20 (MRCFVYVLVCVVASVSYSRA). One can recognise a C-type lectin domain in the interval 93–163 (ANMYCGQMHP…YTNWEGMVAP (71 aa)). Asparagine 103 carries an N-linked (GlcNAc...) asparagine glycan.

In terms of tissue distribution, spines and tube feet.

Functionally, matrix protein of the sea urchin embryo spicule. The function of the matrix proteins is to direct crystal growth in certain orientations and inhibit growth in others. This chain is 30 kDa spicule matrix protein (SM30), found in Hemicentrotus pulcherrimus (Sea urchin).